Reading from the N-terminus, the 269-residue chain is MATH domain and coiled-coil domain-containing protein At2g01790 (269 aa).

Residues 6–134 form the MATH domain; the sequence is AVKKLWVINN…NGEVDIVAEV (129 aa). The stretch at 228–269 forms a coiled coil; it reads KLDWLEKKLKETGKSRLQEIEEDLKDLKVKCADMDALLEFLR.

The polypeptide is MATH domain and coiled-coil domain-containing protein At2g01790 (Arabidopsis thaliana (Mouse-ear cress)).